An 87-amino-acid polypeptide reads, in one-letter code: Small ribosomal subunit protein bS20 (87 aa).

Residues 1 to 25 (MANSAQARKRARQNISHRNRNMSLR) form a disordered region. The segment covering 7–20 (ARKRARQNISHRNR) has biased composition (basic residues).

It belongs to the bacterial ribosomal protein bS20 family.

In terms of biological role, binds directly to 16S ribosomal RNA. The protein is Small ribosomal subunit protein bS20 of Nitrosospira multiformis (strain ATCC 25196 / NCIMB 11849 / C 71).